The sequence spans 418 residues: Glutamate dehydrogenase (418 aa).

The active site involves Lys105. 217 to 223 provides a ligand contact to NAD(+); sequence GYGNVGY.

It belongs to the Glu/Leu/Phe/Val dehydrogenases family. As to quaternary structure, homohexamer.

It is found in the cytoplasm. It carries out the reaction L-glutamate + NAD(+) + H2O = 2-oxoglutarate + NH4(+) + NADH + H(+). The catalysed reaction is L-glutamate + NADP(+) + H2O = 2-oxoglutarate + NH4(+) + NADPH + H(+). The sequence is that of Glutamate dehydrogenase (gdhA) from Aeropyrum pernix (strain ATCC 700893 / DSM 11879 / JCM 9820 / NBRC 100138 / K1).